The chain runs to 1040 residues: Multidrug resistance protein MdtB (1040 aa).

12 helical membrane-spanning segments follow: residues 25–45 (LLMAAILLAGIIGYRFLPVAA), 347–367 (LMLAIALVVMIIYLFLRNIPA), 369–389 (IIPGVAVPLSLIGTFAVMVFL), 396–416 (LTLMALTIATGFVVDDAIVVI), 440–460 (IGFTIISLTFSLIAVLIPLLF), 472–492 (FAVTLAVAILISAVVSLTLTP), 537–557 (WLTLSVAFATLLLSVMLWIVI), 863–883 (LGSTVWLIVAAVVAMYIVLGV), 888–908 (FIHPITILSTLPTAGVGALLA), 910–930 (IIAGSELDIIAIIGIILLIGI), 968–988 (ILMTTLAALLGALPLMLSTGV), and 998–1018 (IAMVGGLLVSQVLTLFTTPVI).

This sequence belongs to the resistance-nodulation-cell division (RND) (TC 2.A.6) family. MdtB subfamily. In terms of assembly, part of a tripartite efflux system composed of MdtA, MdtB and MdtC. MdtB forms a heteromultimer with MdtC.

It is found in the cell inner membrane. This Salmonella gallinarum (strain 287/91 / NCTC 13346) protein is Multidrug resistance protein MdtB.